The primary structure comprises 630 residues: Adagio-like protein 1 (630 aa).

The interval 1–36 (MEWDSESDGAGSIGAGEEEEEEEEEEEGGFGGGGGG) is disordered. Residues 16–28 (GEEEEEEEEEEEG) are compositionally biased toward acidic residues. A PAS domain is found at 48–127 (IEGMLRASGP…SEIRKCIDNG (80 aa)). Cys-95 bears the S-4a-FMN cysteine mark. One can recognise an F-box domain in the interval 216–262 (SSLFQLTDEVLCQSILSRLSPRDIASVSSVCRRLYLLTRNEDLWRMV). Kelch repeat units follow at residues 378-428 (LLVV…TLDG), 430-481 (KLVV…VYGG), 483-535 (KILM…AGPP), and 549-601 (RVLI…VVGG).

This sequence belongs to the ADAGIO family. Post-translationally, FMN binds covalently to cysteine after exposure to blue light and is reversed in the dark.

Its subcellular location is the nucleus. It participates in protein modification; protein ubiquitination. Functionally, component of an E3 ubiquitin ligase complex that plays a central role in blue light-dependent circadian cycles. Acts as a blue light photoreceptor, due to the presence of FMN, that mediates light-regulated protein degradation of critical clock components by targeting them to the proteasome complex. The sequence is that of Adagio-like protein 1 from Oryza sativa subsp. japonica (Rice).